Consider the following 367-residue polypeptide: Probable dual-specificity RNA methyltransferase RlmN (367 aa).

Glutamate 92 serves as the catalytic Proton acceptor. In terms of domain architecture, Radical SAM core spans glutamine 98 to asparagine 326. A disulfide bridge connects residues cysteine 105 and cysteine 341. [4Fe-4S] cluster contacts are provided by cysteine 112, cysteine 116, and cysteine 119. S-adenosyl-L-methionine is bound by residues glycine 164–glutamate 165, serine 196, serine 219–histidine 221, and asparagine 297. Cysteine 341 serves as the catalytic S-methylcysteine intermediate.

This sequence belongs to the radical SAM superfamily. RlmN family. [4Fe-4S] cluster serves as cofactor.

Its subcellular location is the cytoplasm. The catalysed reaction is adenosine(2503) in 23S rRNA + 2 reduced [2Fe-2S]-[ferredoxin] + 2 S-adenosyl-L-methionine = 2-methyladenosine(2503) in 23S rRNA + 5'-deoxyadenosine + L-methionine + 2 oxidized [2Fe-2S]-[ferredoxin] + S-adenosyl-L-homocysteine. It carries out the reaction adenosine(37) in tRNA + 2 reduced [2Fe-2S]-[ferredoxin] + 2 S-adenosyl-L-methionine = 2-methyladenosine(37) in tRNA + 5'-deoxyadenosine + L-methionine + 2 oxidized [2Fe-2S]-[ferredoxin] + S-adenosyl-L-homocysteine. Functionally, specifically methylates position 2 of adenine 2503 in 23S rRNA and position 2 of adenine 37 in tRNAs. The chain is Probable dual-specificity RNA methyltransferase RlmN from Listeria welshimeri serovar 6b (strain ATCC 35897 / DSM 20650 / CCUG 15529 / CIP 8149 / NCTC 11857 / SLCC 5334 / V8).